The chain runs to 353 residues: 41 kDa protein (353 aa).

Positions glutamine 132–aspartate 197 are disordered. A compositionally biased stretch (basic and acidic residues) spans leucine 157–asparagine 169.

The polypeptide is 41 kDa protein (Lactobacillus helveticus (Lactobacillus suntoryeus)).